A 180-amino-acid polypeptide reads, in one-letter code: Large ribosomal subunit protein uL5 (180 aa).

This sequence belongs to the universal ribosomal protein uL5 family. In terms of assembly, part of the 50S ribosomal subunit; part of the 5S rRNA/L5/L18/L25 subcomplex. Contacts the 5S rRNA and the P site tRNA. Forms a bridge to the 30S subunit in the 70S ribosome.

Its function is as follows. This is one of the proteins that bind and probably mediate the attachment of the 5S RNA into the large ribosomal subunit, where it forms part of the central protuberance. In the 70S ribosome it contacts protein S13 of the 30S subunit (bridge B1b), connecting the 2 subunits; this bridge is implicated in subunit movement. Contacts the P site tRNA; the 5S rRNA and some of its associated proteins might help stabilize positioning of ribosome-bound tRNAs. This is Large ribosomal subunit protein uL5 from Lactobacillus acidophilus (strain ATCC 700396 / NCK56 / N2 / NCFM).